Here is a 396-residue protein sequence, read N- to C-terminus: Tyrosine--tRNA ligase (396 aa).

Positions 42–51 match the 'HIGH' region motif; that stretch reads PTAPDIHLGH. The 'KMSKS' region signature appears at 226–230; it reads KMSKS. K229 lines the ATP pocket. The S4 RNA-binding domain occupies 334–395; sequence LPIANLLKEA…GKRKFAKIII (62 aa).

This sequence belongs to the class-I aminoacyl-tRNA synthetase family. TyrS type 2 subfamily. Homodimer.

It localises to the cytoplasm. It carries out the reaction tRNA(Tyr) + L-tyrosine + ATP = L-tyrosyl-tRNA(Tyr) + AMP + diphosphate + H(+). Its function is as follows. Catalyzes the attachment of tyrosine to tRNA(Tyr) in a two-step reaction: tyrosine is first activated by ATP to form Tyr-AMP and then transferred to the acceptor end of tRNA(Tyr). The polypeptide is Tyrosine--tRNA ligase (Francisella tularensis subsp. tularensis (strain SCHU S4 / Schu 4)).